A 367-amino-acid chain; its full sequence is Nociceptin receptor (367 aa).

Over 1–45 (MESLFPAPYWEVLYGSHFQGNLSLLNETVPHHLLLNASHSAFLPL) the chain is Extracellular. N-linked (GlcNAc...) asparagine glycans are attached at residues N21, N26, and N36. The helical transmembrane segment at 46 to 71 (GLKVTIVGLYLAVCIGGLLGNCLVMY) threads the bilayer. The Cytoplasmic segment spans residues 72–84 (VILRHTKMKTATN). Residues 85-106 (IYIFNLALADTLVLLTLPFQGT) form a helical membrane-spanning segment. The Extracellular segment spans residues 107-121 (DILLGFWPFGNALCK). Residues C120 and C197 are joined by a disulfide bond. A helical transmembrane segment spans residues 122 to 143 (TVIAIDYYNMFTSTFTLTAMSV). Topologically, residues 144–162 (DRYVAICHPIRALDVRTSS) are cytoplasmic. The helical transmembrane segment at 163 to 185 (KAQAVNVAIWALASVVGVPVAIM) threads the bilayer. The Extracellular portion of the chain corresponds to 186 to 208 (GSAQVEDEEIECLVEIPAPQDYW). The helical transmembrane segment at 209–233 (GPVFAICIFLFSFIIPVLIISVCYS) threads the bilayer. The Cytoplasmic segment spans residues 234 to 261 (LMIRRLRGVRLLSGSREKDRNLRRITRL). A helical transmembrane segment spans residues 262–282 (VLVVVAVFVGCWTPVQVFVLV). At 283 to 297 (QGLGVQPGSETAVAI) the chain is on the extracellular side. The chain crosses the membrane as a helical span at residues 298–319 (LRFCTALGYVNSCLNPILYAFL). Over 320–367 (DENFKACFRKFCCASSLHREMQVSDRVRSIAKDVGLGCKTSETVPRPA) the chain is Cytoplasmic. C331 carries S-palmitoyl cysteine lipidation.

It belongs to the G-protein coupled receptor 1 family. Post-translationally, phosphorylation at Ser-360 requires GRK3. Highly expressed in several brain areas, the intestine, liver and spleen. Detected in sympathetic stellate ganglion neurons.

The protein resides in the cell membrane. Its subcellular location is the cytoplasmic vesicle. In terms of biological role, G-protein coupled opioid receptor that functions as a receptor for the endogenous neuropeptide nociceptin. Ligand binding causes a conformation change that triggers signaling via guanine nucleotide-binding proteins (G proteins) and modulates the activity of down-stream effectors. Signaling via G proteins mediates inhibition of adenylate cyclase activity and calcium channel activity. Arrestins modulate signaling via G proteins and mediate the activation of alternative signaling pathways that lead to the activation of MAP kinases. Plays a role in modulating nociception and the perception of pain. Plays a role in the regulation of locomotor activity by the neuropeptide nociceptin. The chain is Nociceptin receptor (Oprl1) from Rattus norvegicus (Rat).